We begin with the raw amino-acid sequence, 207 residues long: Large ribosomal subunit protein uL4 (207 aa).

The segment at 50–75 (KTKTRSEVAGSGKKPFKQKGTGNARQ) is disordered.

Belongs to the universal ribosomal protein uL4 family. Part of the 50S ribosomal subunit.

Its function is as follows. One of the primary rRNA binding proteins, this protein initially binds near the 5'-end of the 23S rRNA. It is important during the early stages of 50S assembly. It makes multiple contacts with different domains of the 23S rRNA in the assembled 50S subunit and ribosome. Functionally, forms part of the polypeptide exit tunnel. In Pelobacter propionicus (strain DSM 2379 / NBRC 103807 / OttBd1), this protein is Large ribosomal subunit protein uL4.